The sequence spans 852 residues: DNA mismatch repair protein MutS (852 aa).

602 to 609 (GPNMSGKS) contributes to the ATP binding site.

Belongs to the DNA mismatch repair MutS family.

Functionally, this protein is involved in the repair of mismatches in DNA. It is possible that it carries out the mismatch recognition step. This protein has a weak ATPase activity. This Streptococcus thermophilus (strain CNRZ 1066) protein is DNA mismatch repair protein MutS.